The following is a 122-amino-acid chain: Small ribosomal subunit protein uS13 (122 aa).

The interval 95-122 (GLPVHGQRTHTNARTRKGPRKGAVGKKK) is disordered.

It belongs to the universal ribosomal protein uS13 family. Part of the 30S ribosomal subunit. Forms a loose heterodimer with protein S19. Forms two bridges to the 50S subunit in the 70S ribosome.

Its function is as follows. Located at the top of the head of the 30S subunit, it contacts several helices of the 16S rRNA. In the 70S ribosome it contacts the 23S rRNA (bridge B1a) and protein L5 of the 50S subunit (bridge B1b), connecting the 2 subunits; these bridges are implicated in subunit movement. Contacts the tRNAs in the A and P-sites. The chain is Small ribosomal subunit protein uS13 from Lawsonia intracellularis (strain PHE/MN1-00).